The primary structure comprises 353 residues: Outer membrane protein P5 (353 aa).

The N-terminal stretch at Met1–Ala21 is a signal peptide. Beta stranded transmembrane passes span Thr27–Ala37, Ser58–Ile69, Leu77–Asp85, His104–Glu115, Leu120–Val128, Gly158–Ala167, Leu172–Gln179, and Ser205–Arg213. Positions Val227 to Lys353 constitute an OmpA-like domain. The cysteines at positions 326 and 338 are disulfide-linked.

It belongs to the outer membrane OOP (TC 1.B.6) superfamily. OmpA family. Monomer and homodimer.

The protein resides in the cell outer membrane. In terms of biological role, with TolR probably plays a role in maintaining the position of the peptidoglycan cell wall in the periplasm. Acts as a porin with low permeability that allows slow penetration of small solutes; an internal gate slows down solute passage. This is Outer membrane protein P5 from Haemophilus influenzae.